A 445-amino-acid chain; its full sequence is uncharacterized protein (445 aa).

The segment at 139-160 (TESQKDLEYERKANKTKEENQQ) is disordered.

This is an uncharacterized protein from Mycoplasma pneumoniae (strain ATCC 29342 / M129 / Subtype 1) (Mycoplasmoides pneumoniae).